The sequence spans 1440 residues: Gag-Pro-Pol polyprotein (1440 aa).

Residue Gly-2 is the site of N-myristoyl glycine; by host attachment. Residues 93–117 (AREAPPSAPPADDPQKPPPYPEHAQ) form a disordered region. Positions 98–101 (PSAP) match the PTAP/PSAP motif motif. Over residues 98–113 (PSAPPADDPQKPPPYP) the composition is skewed to pro residues. Residues 109-112 (PPPY) carry the PPXY motif motif. 2 consecutive CCHC-type zinc fingers follow at residues 349 to 366 (QPCF…DCKQ) and 372 to 389 (GPCP…DCPQ). Positions 457–535 (VQALLDTGAD…DQWTILGRDA (79 aa)) constitute a Peptidase A2 domain. Asp-462 acts as the For protease activity; shared with dimeric partner in catalysis. A Reverse transcriptase domain is found at 593–783 (LEAKHIEPYQ…GSIHFLGQVI (191 aa)). Asp-659, Asp-734, Asp-735, Asp-1019, Glu-1052, Asp-1074, Asp-1135, Asp-1208, and Asp-1265 together coordinate Mg(2+). Residues 1010–1143 (IDHAPCLFSD…TDALMLAPLL (134 aa)) form the RNase H type-1 domain. In terms of domain architecture, Integrase catalytic spans 1197-1366 (RGHAPNVIWQ…PSIPENTLPP (170 aa)). The integrase-type DNA-binding region spans 1371–1420 (KWYYYKIPGLTNPRWSGPVQSLKEAAGAALIPVGGSHLWIPWRLLKRGIC).

Interacts with human TSG101. This interaction is essential for budding and release of viral particles. It depends on Mg(2+) as a cofactor. Specific enzymatic cleavages by the viral protease yield mature proteins. The polyprotein is cleaved during and after budding, this process is termed maturation. The protease is autoproteolytically processed at its N- and C-termini.

The protein localises to the virion. It carries out the reaction Endonucleolytic cleavage to 5'-phosphomonoester.. The enzyme catalyses DNA(n) + a 2'-deoxyribonucleoside 5'-triphosphate = DNA(n+1) + diphosphate. Its function is as follows. Matrix protein p19 targets Gag, Gag-Pro and Gag-Pro-Pol polyproteins to the plasma membrane via a multipartite membrane binding signal, that includes its myristoylated N-terminus. Also mediates nuclear localization of the preintegration complex. Capsid protein p24 forms the conical core of the virus that encapsulates the genomic RNA-nucleocapsid complex. Functionally, nucleocapsid protein p15 is involved in the packaging and encapsidation of two copies of the genome. In terms of biological role, the aspartyl protease mediates proteolytic cleavages of Gag, Gag-Pro and Gag-Pro-Pol polyproteins during or shortly after the release of the virion from the plasma membrane. Cleavages take place as an ordered, step-wise cascade to yield mature proteins. This process is called maturation. Displays maximal activity during the budding process just prior to particle release from the cell. Hydrolyzes host EIF4GI in order to shut off the capped cellular mRNA translation. The resulting inhibition of cellular protein synthesis serves to ensure maximal viral gene expression and to evade host immune response. Its function is as follows. Reverse transcriptase (RT) is a multifunctional enzyme that converts the viral RNA genome into dsDNA in the cytoplasm, shortly after virus entry into the cell. This enzyme displays a DNA polymerase activity that can copy either DNA or RNA templates, and a ribonuclease H (RNase H) activity that cleaves the RNA strand of RNA-DNA heteroduplexes in a partially processive 3' to 5'-endonucleasic mode. Conversion of viral genomic RNA into dsDNA requires many steps. A tRNA-Pro binds to the primer-binding site (PBS) situated at the 5'-end of the viral RNA. RT uses the 3' end of the tRNA primer to perform a short round of RNA-dependent minus-strand DNA synthesis. The reading proceeds through the U5 region and ends after the repeated (R) region which is present at both ends of viral RNA. The portion of the RNA-DNA heteroduplex is digested by the RNase H, resulting in a ssDNA product attached to the tRNA primer. This ssDNA/tRNA hybridizes with the identical R region situated at the 3' end of viral RNA. This template exchange, known as minus-strand DNA strong stop transfer, can be either intra- or intermolecular. RT uses the 3' end of this newly synthesized short ssDNA to perform the RNA-dependent minus-strand DNA synthesis of the whole template. RNase H digests the RNA template except for a polypurine tract (PPT) situated at the 5' end of the genome. It is not clear if both polymerase and RNase H activities are simultaneous. RNase H probably can proceed both in a polymerase-dependent (RNA cut into small fragments by the same RT performing DNA synthesis) and a polymerase-independent mode (cleavage of remaining RNA fragments by free RTs). Secondly, RT performs DNA-directed plus-strand DNA synthesis using the PPT that has not been removed by RNase H as primer. PPT and tRNA primers are then removed by RNase H. The 3' and 5' ssDNA PBS regions hybridize to form a circular dsDNA intermediate. Strand displacement synthesis by RT to the PBS and PPT ends produces a blunt ended, linear dsDNA copy of the viral genome that includes long terminal repeats (LTRs) at both ends. Integrase catalyzes viral DNA integration into the host chromosome, by performing a series of DNA cutting and joining reactions. This enzyme activity takes place after virion entry into a cell and reverse transcription of the RNA genome in dsDNA. The first step in the integration process is 3' processing. This step requires a complex comprising the viral genome, matrix protein, and integrase. This complex is called the pre-integration complex (PIC). The integrase protein removes 2 nucleotides from each 3' end of the viral DNA, leaving recessed dinucleotides OH's at the 3' ends. In the second step, the PIC access cell chromosomes during cell division. The third step, termed strand transfer, the integrase protein joins the previously processed 3' ends to the 5'-ends of strands of target cellular DNA at the site of integration. The 5'-ends are produced by integrase-catalyzed staggered cuts, 5 bp apart. A Y-shaped, gapped, recombination intermediate results, with the 5'-ends of the viral DNA strands and the 3' ends of target DNA strands remaining unjoined, flanking a gap of 5 bp. The last step is viral DNA integration into host chromosome. This involves host DNA repair synthesis in which the 5 bp gaps between the unjoined strands (see above) are filled in and then ligated. The chain is Gag-Pro-Pol polyprotein (gag-pro-pol) from Human T-cell leukemia virus 3 (strain Pyl43) (HTLV-3).